Here is a 542-residue protein sequence, read N- to C-terminus: Dihydropyrimidinase (542 aa).

Zn(2+) contacts are provided by histidine 62, histidine 64, and lysine 167. Lysine 167 carries the post-translational modification N6-carboxylysine. Tyrosine 172 lines the substrate pocket. Residues histidine 199 and histidine 255 each contribute to the Zn(2+) site. Serine 331 serves as a coordination point for substrate. Aspartate 358 contributes to the Zn(2+) binding site. Asparagine 392 lines the substrate pocket.

This sequence belongs to the metallo-dependent hydrolases superfamily. Hydantoinase/dihydropyrimidinase family. As to quaternary structure, homotetramer. Zn(2+) serves as cofactor. In terms of processing, carboxylation allows a single lysine to coordinate two zinc ions.

The enzyme catalyses 5,6-dihydrouracil + H2O = 3-(carbamoylamino)propanoate + H(+). Functionally, catalyzes the second step of the reductive pyrimidine degradation, the reversible hydrolytic ring opening of dihydropyrimidines. Can catalyze the ring opening of 5,6-dihydrouracil to N-carbamyl-alanine and of 5,6-dihydrothymine to N-carbamyl-amino isobutyrate. In Lachancea kluyveri (strain ATCC 58438 / CBS 3082 / BCRC 21498 / NBRC 1685 / JCM 7257 / NCYC 543 / NRRL Y-12651) (Yeast), this protein is Dihydropyrimidinase (PYD2).